The following is a 213-amino-acid chain: Cytochrome c biogenesis ATP-binding export protein CcmA (213 aa).

Residues 7 to 213 (LKTKKLACQR…VRLENYKFTE (207 aa)) enclose the ABC transporter domain. 39–46 (GHNGIGKT) contributes to the ATP binding site.

The protein belongs to the ABC transporter superfamily. CcmA exporter (TC 3.A.1.107) family. The complex is composed of two ATP-binding proteins (CcmA) and two transmembrane proteins (CcmB).

The protein localises to the cell inner membrane. It carries out the reaction heme b(in) + ATP + H2O = heme b(out) + ADP + phosphate + H(+). Part of the ABC transporter complex CcmAB involved in the biogenesis of c-type cytochromes; once thought to export heme, this seems not to be the case, but its exact role is uncertain. Responsible for energy coupling to the transport system. The polypeptide is Cytochrome c biogenesis ATP-binding export protein CcmA (Pasteurella multocida (strain Pm70)).